The sequence spans 388 residues: Chaperone protein DnaJ (388 aa).

One can recognise a J domain in the interval 4 to 69 (DYYDILGVDE…EKRQRYDQFG (66 aa)). Basic and acidic residues-rich tracts occupy residues 27 to 50 (KAME…KEAS), 58 to 73 (DPEK…HDGV), and 113 to 124 (GRSERGRGRPGS). Disordered stretches follow at residues 27 to 86 (KAME…GRGR) and 99 to 125 (SDIF…PGSD). The CR-type zinc-finger motif lies at 140–225 (GTEKNLRLQK…CGGEGRVQGE (86 aa)). Zn(2+) is bound by residues Cys153, Cys156, Cys173, Cys176, Cys199, Cys202, Cys213, and Cys216. CXXCXGXG motif repeat units lie at residues 153–160 (CESCDGTG), 173–180 (CPKCDGTG), 199–206 (CPRCEGEG), and 213–220 (CDDCGGEG). Residues 362 to 376 (AHDNFQPRPPEEDTQ) are compositionally biased toward basic and acidic residues. The tract at residues 362 to 388 (AHDNFQPRPPEEDTQKSFFRRVSDVFS) is disordered.

Belongs to the DnaJ family. As to quaternary structure, homodimer. Zn(2+) serves as cofactor.

The protein localises to the cytoplasm. In terms of biological role, participates actively in the response to hyperosmotic and heat shock by preventing the aggregation of stress-denatured proteins and by disaggregating proteins, also in an autonomous, DnaK-independent fashion. Unfolded proteins bind initially to DnaJ; upon interaction with the DnaJ-bound protein, DnaK hydrolyzes its bound ATP, resulting in the formation of a stable complex. GrpE releases ADP from DnaK; ATP binding to DnaK triggers the release of the substrate protein, thus completing the reaction cycle. Several rounds of ATP-dependent interactions between DnaJ, DnaK and GrpE are required for fully efficient folding. Also involved, together with DnaK and GrpE, in the DNA replication of plasmids through activation of initiation proteins. In Salinibacter ruber (strain DSM 13855 / M31), this protein is Chaperone protein DnaJ.